Reading from the N-terminus, the 504-residue chain is Glutamate--tRNA ligase (504 aa).

The 'HIGH' region motif lies at 10–20 (PSPTGDPHVGT). The short motif at 251-255 (KLSKR) is the 'KMSKS' region element. K254 serves as a coordination point for ATP.

This sequence belongs to the class-I aminoacyl-tRNA synthetase family. Glutamate--tRNA ligase type 1 subfamily. Monomer.

It is found in the cytoplasm. The enzyme catalyses tRNA(Glu) + L-glutamate + ATP = L-glutamyl-tRNA(Glu) + AMP + diphosphate. Functionally, catalyzes the attachment of glutamate to tRNA(Glu) in a two-step reaction: glutamate is first activated by ATP to form Glu-AMP and then transferred to the acceptor end of tRNA(Glu). This Cellvibrio japonicus (strain Ueda107) (Pseudomonas fluorescens subsp. cellulosa) protein is Glutamate--tRNA ligase.